The following is a 496-amino-acid chain: MEISIPTTLGLAVIIFIIFKLLTRTTSKKNLLPEPWRLPIIGHMHHLIGTMPHRGVMELARKHGSLMHLQLGEVSTIVVSSPRWAKEVLTTYDITFANRPETLTGEIVAYHNTDIVLAPYGEYWRQLRKLCTLELLSNKKVKSFQSLREEECWNLVKDIRSTGQGSPINLSENIFKMIATILSRAAFGKGIKDQMKFTELVKEILRLTGGFDVADIFPSKKLLHHLSGKRAKLTNIHNKLDNLINNIIAEHPGNRTSSSQETLLDVLLRLKESAEFPLTADNVKAVILDMFGAGTDTSSATIEWAISELIRCPRAMEKVQTELRQALNGKERIQEEDLQELNYLKLVIKETLRLHPPLPLVMPRECREPCVLGGYDIPSKTKLIVNVFAINRDPEYWKDAETFMPERFENSPITVMGSEYEYLPFGAGRRMCPGAALGLANVELPLAHILYYFNWKLPNGKTFEDLDMTESFGATVQRKTELLLVPTDFQTLTAST.

A helical membrane pass occupies residues 3–23; the sequence is ISIPTTLGLAVIIFIIFKLLT. Residue C432 coordinates heme.

The protein belongs to the cytochrome P450 family. Requires heme as cofactor.

It is found in the membrane. In terms of biological role, valencene oxidase, which preferentially hydroylates the C2 position of (+)-valencene in the trans-orientation, producing trans-nootkatol that can be further oxidized to (+)-nootkatone. Can also catalyze the three-step conversion of germacrene A to germacra-1(10),4,11(13)-trien-12-oic acid and the partial conversion of the non-natural substrate amorpha-4,11-diene into artemisinic alcohol and artemisinic aldehyde. The sequence is that of Cytochrome P450 71AV8 (CYP71AV8) from Cichorium intybus (Chicory).